A 335-amino-acid chain; its full sequence is Biotin synthase (335 aa).

Residues K41–R269 form the Radical SAM core domain. [4Fe-4S] cluster-binding residues include C56, C60, and C63. Residues C100, C132, C192, and R264 each contribute to the [2Fe-2S] cluster site.

The protein belongs to the radical SAM superfamily. Biotin synthase family. As to quaternary structure, homodimer. Requires [4Fe-4S] cluster as cofactor. [2Fe-2S] cluster is required as a cofactor.

It carries out the reaction (4R,5S)-dethiobiotin + (sulfur carrier)-SH + 2 reduced [2Fe-2S]-[ferredoxin] + 2 S-adenosyl-L-methionine = (sulfur carrier)-H + biotin + 2 5'-deoxyadenosine + 2 L-methionine + 2 oxidized [2Fe-2S]-[ferredoxin]. It functions in the pathway cofactor biosynthesis; biotin biosynthesis; biotin from 7,8-diaminononanoate: step 2/2. Functionally, catalyzes the conversion of dethiobiotin (DTB) to biotin by the insertion of a sulfur atom into dethiobiotin via a radical-based mechanism. This Nostoc sp. (strain PCC 7120 / SAG 25.82 / UTEX 2576) protein is Biotin synthase.